Consider the following 144-residue polypeptide: Putative golgin subfamily A member 2B (144 aa).

Disordered stretches follow at residues 1-20 (MDSE…PEDL) and 95-132 (SCGR…EAAG). Residues 110-131 (AEGGGVHQQAGPGQGRGEGEAA) show a composition bias toward gly residues.

Belongs to the GOLGA2 family.

This is Putative golgin subfamily A member 2B (GOLGA2P5) from Homo sapiens (Human).